The following is a 307-amino-acid chain: Dioxygenase swnH1 (307 aa).

The Fe cation site is built by His149, Asp151, and His227.

The protein belongs to the PhyH family. As to quaternary structure, homodimer. Fe cation serves as cofactor.

The protein operates within mycotoxin biosynthesis. Dioxygenase; part of the gene cluster that mediates the biosynthesis of swainsonine (SW), a cytotoxic fungal alkaloid and a potential cancer therapy drug. Swainsonine production occurs via a multibranched pathway and is dispensable for fungal colonization of plants and infection of insect hosts. The first step of swainsonine biosynthesis is the production of the precursor pipecolic acid (PA) via conversion of L-lysine (Lys) to 1-piperideine-6-carboxylate (P6C) by the aminotransferase swnA, the latter being further reduced to PA by the reductase swnR. The PKS-NRPS hybrid synthetase swnK uptakes and condensates PA and malonyl-CoA with and without skipping of the ketoreductase (KR) domain in order to produce 3 intermediates, 1-oxoindolizidine, (1S)-1-hydroxyindolizin, and (1R)-1-hydroxyindolizine; with the transisomer (1S)-1-hydroxyindolizin being predominant. The terminal thioester reductase (TE) domain of swnK is involved in reduction of the thioester bond to release the intermediate aldehydes. The oxidoreductase swnN could contribute to the reduction of 1-oxoindolizidine to (1S)-1-hydroxyindolizin and (1R)-1-hydroxyindolizine, contributing to the major route of SW production. The dioxygenase swnH2 would be responsible for the oxidization of (1R)-1-hydroxyindolizine into (1R,2S)-1,2-dihydroxyindolizine and of (1S)-1-hydroxyindolizin to yield both (1R,2S)-1,2-dihydroxyindolizine and (1S,2S)-1,2-dihydroxyindolizine. The dioxygenase swnH1 then performs the conversion of the 1,2-dihydroxyindolizine epimers to SW. This is Dioxygenase swnH1 from Arthroderma benhamiae (strain ATCC MYA-4681 / CBS 112371) (Trichophyton mentagrophytes).